We begin with the raw amino-acid sequence, 492 residues long: N-succinylglutamate 5-semialdehyde dehydrogenase (492 aa).

NAD(+) is bound at residue 220-225 (GSASTG). Residues Glu243 and Cys277 contribute to the active site.

This sequence belongs to the aldehyde dehydrogenase family. AstD subfamily.

It carries out the reaction N-succinyl-L-glutamate 5-semialdehyde + NAD(+) + H2O = N-succinyl-L-glutamate + NADH + 2 H(+). It functions in the pathway amino-acid degradation; L-arginine degradation via AST pathway; L-glutamate and succinate from L-arginine: step 4/5. Functionally, catalyzes the NAD-dependent reduction of succinylglutamate semialdehyde into succinylglutamate. In Salmonella paratyphi A (strain AKU_12601), this protein is N-succinylglutamate 5-semialdehyde dehydrogenase.